Here is a 487-residue protein sequence, read N- to C-terminus: Aspartyl/glutamyl-tRNA(Asn/Gln) amidotransferase subunit B (487 aa).

It belongs to the GatB/GatE family. GatB subfamily. Heterotrimer of A, B and C subunits.

The catalysed reaction is L-glutamyl-tRNA(Gln) + L-glutamine + ATP + H2O = L-glutaminyl-tRNA(Gln) + L-glutamate + ADP + phosphate + H(+). It carries out the reaction L-aspartyl-tRNA(Asn) + L-glutamine + ATP + H2O = L-asparaginyl-tRNA(Asn) + L-glutamate + ADP + phosphate + 2 H(+). Allows the formation of correctly charged Asn-tRNA(Asn) or Gln-tRNA(Gln) through the transamidation of misacylated Asp-tRNA(Asn) or Glu-tRNA(Gln) in organisms which lack either or both of asparaginyl-tRNA or glutaminyl-tRNA synthetases. The reaction takes place in the presence of glutamine and ATP through an activated phospho-Asp-tRNA(Asn) or phospho-Glu-tRNA(Gln). This Acidiphilium cryptum (strain JF-5) protein is Aspartyl/glutamyl-tRNA(Asn/Gln) amidotransferase subunit B.